The primary structure comprises 399 residues: MGRAKKVVLAYSGGVDTSVCIPYLKHEWGVEEVITLAADLGQGDELEPIRKKALDAGAAQSLIADGTESFIADYAFPAIQANALYENRYPLSTALARPLIAKLLVEAAEIHGADAVAHGCTGKGNDQVRFDVSITALNPDIKVLAPAREWGMSREETIAYGEKYGVQSPVKKSSPYSIDRNLLGRSVEAGPLEDPWVEPLEEVYDLTKAIADTPDQPEYVDIDFAQGLPTQLNGQALSPVALVEQLNQIVGNHGVGRIDMVENRLVGIKSREIYEAPALLVLIQAHRELESLALTADVTHYKRGIEETYSQLVYNGLWFSPLKDALDAFIQQTQKQVTGTVRVKLFKGAATVVGRQSPHSLYTPDLATYGAEDAFDHKAAEGFIYVWGLPTRVWSQQQR.

Residues 10 to 18 and Ala-38 contribute to the ATP site; that span reads AYSGGVDTS. Tyr-89 contributes to the L-citrulline binding site. Gly-119 provides a ligand contact to ATP. Positions 121, 125, and 126 each coordinate L-aspartate. Asn-125 contacts L-citrulline. 5 residues coordinate L-citrulline: Arg-129, Ser-177, Ser-186, Glu-262, and Tyr-274.

It belongs to the argininosuccinate synthase family. Type 1 subfamily. In terms of assembly, homotetramer.

The protein localises to the cytoplasm. It catalyses the reaction L-citrulline + L-aspartate + ATP = 2-(N(omega)-L-arginino)succinate + AMP + diphosphate + H(+). Its pathway is amino-acid biosynthesis; L-arginine biosynthesis; L-arginine from L-ornithine and carbamoyl phosphate: step 2/3. The polypeptide is Argininosuccinate synthase (Acaryochloris marina (strain MBIC 11017)).